Reading from the N-terminus, the 428-residue chain is Pyruvate kinase (428 aa).

R34 serves as a coordination point for substrate. K(+) contacts are provided by N36, S38, D68, and T69. 36 to 39 (NFSH) serves as a coordination point for ATP. The ATP site is built by R75 and K152. E214 is a binding site for Mg(2+). The substrate site is built by G237, D238, and T270. D238 is a Mg(2+) binding site.

Belongs to the pyruvate kinase family. As to quaternary structure, homotetramer. The cofactor is Mg(2+). Requires K(+) as cofactor.

The catalysed reaction is pyruvate + ATP = phosphoenolpyruvate + ADP + H(+). It participates in carbohydrate degradation; glycolysis; pyruvate from D-glyceraldehyde 3-phosphate: step 5/5. The sequence is that of Pyruvate kinase (PYK1) from Encephalitozoon cuniculi (strain GB-M1) (Microsporidian parasite).